Here is a 273-residue protein sequence, read N- to C-terminus: DnaJ homolog subfamily C member 27 (273 aa).

GTP-binding positions include 23–30 (GNAEVGKS), 71–75 (DMAGH), and 134–137 (NKVD). The J domain maps to 217 to 273 (DSWDMLGVKPGATREEVNKAYRKLAVLLHPDKCVAPGSEDAFKAVVNARTSLLKNIK).

It belongs to the small GTPase superfamily. Rab family.

It localises to the nucleus. In terms of biological role, GTPase possibly involved in regulation of the MEK/ERK pathway. The protein is DnaJ homolog subfamily C member 27 (dnajc27) of Danio rerio (Zebrafish).